We begin with the raw amino-acid sequence, 24 residues long: Lectin (24 aa).

The segment covering 1 to 18 (AEEQSFSSTKFSTDQPNL) has biased composition (polar residues). The segment at 1 to 24 (AEEQSFSSTKFSTDQPNLILQGDA) is disordered.

It belongs to the leguminous lectin family. Homotetramer.

The polypeptide is Lectin (Crotalaria juncea (Sunn hemp)).